The chain runs to 186 residues: Intraflagellar transport protein 27 homolog (186 aa).

GTP contacts are provided by residues Gly12–Thr19, Asp64–Lys68, and Asn123–Asp126.

It belongs to the small GTPase superfamily. Rab family. In terms of assembly, component of the IFT complex B, at least composed of IFT20, IFT25, IFT27, IFT52, IFT57, IFT74, IFT81, IFT88 and TRAF3IP1. Interacts with IFT25. Interacts with IFT70B. Interacts with RABL2/RABL2A; binding is equal in the presence of GTP or GDP. Interacts with ARL6; recognizes and binds with the GTP-free form of ARL6.

It is found in the cell projection. Its subcellular location is the cilium. The protein localises to the cytoplasm. The protein resides in the flagellum. Functionally, small GTPase-like component of the intraflagellar transport (IFT) complex B that promotes the exit of the BBSome complex from cilia via its interaction with ARL6. Not involved in entry of the BBSome complex into cilium. Prevents aggregation of GTP-free ARL6. Required for hedgehog signaling. Forms a subcomplex within the IFT complex B with IFT25. Its role in intraflagellar transport is mainly seen in tissues rich in ciliated cells such as kidney and testis. Essential for male fertility, spermiogenesis and sperm flagella formation. Plays a role in the early development of the kidney. May be involved in the regulation of ureteric bud initiation. The protein is Intraflagellar transport protein 27 homolog (IFT27) of Homo sapiens (Human).